A 366-amino-acid chain; its full sequence is Probable cinnamyl alcohol dehydrogenase 3 (366 aa).

A Zn(2+)-binding site is contributed by Cys53. Position 55 (Ser55) interacts with NADP(+). Zn(2+) is bound by residues His75, Glu76, Cys106, Cys109, Cys112, Cys120, and Cys169. Residues Thr173, 194–199 (GLGGLG), 217–222 (SSSPGK), Thr257, Gly281, and 304–306 (SNI) each bind NADP(+).

The protein belongs to the zinc-containing alcohol dehydrogenase family. As to quaternary structure, homodimer. It depends on Zn(2+) as a cofactor.

It catalyses the reaction (E)-cinnamyl alcohol + NADP(+) = (E)-cinnamaldehyde + NADPH + H(+). The catalysed reaction is (E)-coniferol + NADP(+) = (E)-coniferaldehyde + NADPH + H(+). It carries out the reaction (E)-sinapyl alcohol + NADP(+) = (E)-sinapaldehyde + NADPH + H(+). The enzyme catalyses (E)-4-coumaroyl alcohol + NADP(+) = (E)-4-coumaraldehyde + NADPH + H(+). It catalyses the reaction (E)-caffeyl alcohol + NADP(+) = (E)-caffeyl aldehyde + NADPH + H(+). The protein operates within aromatic compound metabolism; phenylpropanoid biosynthesis. In terms of biological role, involved in lignin biosynthesis. Catalyzes the final step specific for the production of lignin monomers. Catalyzes the NADPH-dependent reduction of coniferaldehyde, 5-hydroxyconiferaldehyde, sinapaldehyde, 4-coumaraldehyde and caffeyl aldehyde to their respective alcohols. The protein is Probable cinnamyl alcohol dehydrogenase 3 of Oryza sativa subsp. japonica (Rice).